The chain runs to 336 residues: Holliday junction branch migration complex subunit RuvB (336 aa).

The interval 4–184 (ADRIISAIAK…FGIVQRLEFY (181 aa)) is large ATPase domain (RuvB-L). ATP contacts are provided by residues I23, R24, G65, K68, T69, T70, 131-133 (EDY), R174, Y184, and R221. T69 provides a ligand contact to Mg(2+). The interval 185-255 (SIEDLTSIVM…IAKAALAMLD (71 aa)) is small ATPAse domain (RuvB-S). The head domain (RuvB-H) stretch occupies residues 258–336 (QAGFDYLDRK…HFGLAKLADK (79 aa)). The DNA site is built by R294, R313, and R318.

This sequence belongs to the RuvB family. As to quaternary structure, homohexamer. Forms an RuvA(8)-RuvB(12)-Holliday junction (HJ) complex. HJ DNA is sandwiched between 2 RuvA tetramers; dsDNA enters through RuvA and exits via RuvB. An RuvB hexamer assembles on each DNA strand where it exits the tetramer. Each RuvB hexamer is contacted by two RuvA subunits (via domain III) on 2 adjacent RuvB subunits; this complex drives branch migration. In the full resolvosome a probable DNA-RuvA(4)-RuvB(12)-RuvC(2) complex forms which resolves the HJ.

Its subcellular location is the cytoplasm. It catalyses the reaction ATP + H2O = ADP + phosphate + H(+). Its function is as follows. The RuvA-RuvB-RuvC complex processes Holliday junction (HJ) DNA during genetic recombination and DNA repair, while the RuvA-RuvB complex plays an important role in the rescue of blocked DNA replication forks via replication fork reversal (RFR). RuvA specifically binds to HJ cruciform DNA, conferring on it an open structure. The RuvB hexamer acts as an ATP-dependent pump, pulling dsDNA into and through the RuvAB complex. RuvB forms 2 homohexamers on either side of HJ DNA bound by 1 or 2 RuvA tetramers; 4 subunits per hexamer contact DNA at a time. Coordinated motions by a converter formed by DNA-disengaged RuvB subunits stimulates ATP hydrolysis and nucleotide exchange. Immobilization of the converter enables RuvB to convert the ATP-contained energy into a lever motion, pulling 2 nucleotides of DNA out of the RuvA tetramer per ATP hydrolyzed, thus driving DNA branch migration. The RuvB motors rotate together with the DNA substrate, which together with the progressing nucleotide cycle form the mechanistic basis for DNA recombination by continuous HJ branch migration. Branch migration allows RuvC to scan DNA until it finds its consensus sequence, where it cleaves and resolves cruciform DNA. In Actinobacillus succinogenes (strain ATCC 55618 / DSM 22257 / CCUG 43843 / 130Z), this protein is Holliday junction branch migration complex subunit RuvB.